Consider the following 163-residue polypeptide: UPF0262 protein RPE_4483 (163 aa).

Belongs to the UPF0262 family.

The polypeptide is UPF0262 protein RPE_4483 (Rhodopseudomonas palustris (strain BisA53)).